Reading from the N-terminus, the 208-residue chain is FMN-dependent NADH:quinone oxidoreductase 1 (208 aa).

The protein belongs to the azoreductase type 1 family. Homodimer. Requires FMN as cofactor.

It catalyses the reaction 2 a quinone + NADH + H(+) = 2 a 1,4-benzosemiquinone + NAD(+). The catalysed reaction is N,N-dimethyl-1,4-phenylenediamine + anthranilate + 2 NAD(+) = 2-(4-dimethylaminophenyl)diazenylbenzoate + 2 NADH + 2 H(+). Functionally, quinone reductase that provides resistance to thiol-specific stress caused by electrophilic quinones. Also exhibits azoreductase activity. Catalyzes the reductive cleavage of the azo bond in aromatic azo compounds to the corresponding amines. The chain is FMN-dependent NADH:quinone oxidoreductase 1 from Bacillus cereus (strain ATCC 14579 / DSM 31 / CCUG 7414 / JCM 2152 / NBRC 15305 / NCIMB 9373 / NCTC 2599 / NRRL B-3711).